We begin with the raw amino-acid sequence, 343 residues long: Branched-chain-amino-acid aminotransferase (343 aa).

K182 carries the post-translational modification N6-(pyridoxal phosphate)lysine.

It belongs to the class-IV pyridoxal-phosphate-dependent aminotransferase family. Requires pyridoxal 5'-phosphate as cofactor.

It catalyses the reaction L-leucine + 2-oxoglutarate = 4-methyl-2-oxopentanoate + L-glutamate. It carries out the reaction L-isoleucine + 2-oxoglutarate = (S)-3-methyl-2-oxopentanoate + L-glutamate. The catalysed reaction is L-valine + 2-oxoglutarate = 3-methyl-2-oxobutanoate + L-glutamate. Its pathway is amino-acid biosynthesis; L-isoleucine biosynthesis; L-isoleucine from 2-oxobutanoate: step 4/4. The protein operates within amino-acid biosynthesis; L-leucine biosynthesis; L-leucine from 3-methyl-2-oxobutanoate: step 4/4. It participates in amino-acid biosynthesis; L-valine biosynthesis; L-valine from pyruvate: step 4/4. Acts on leucine, isoleucine and valine. This chain is Branched-chain-amino-acid aminotransferase (ilvE), found in Haemophilus influenzae (strain ATCC 51907 / DSM 11121 / KW20 / Rd).